Reading from the N-terminus, the 79-residue chain is Acyl carrier protein (79 aa).

The 76-residue stretch at 2–77 folds into the Carrier domain; that stretch reads SEVADKVKKI…DAVEYIEKQK (76 aa). At Ser-37 the chain carries O-(pantetheine 4'-phosphoryl)serine.

Belongs to the acyl carrier protein (ACP) family. Post-translationally, 4'-phosphopantetheine is transferred from CoA to a specific serine of apo-ACP by AcpS. This modification is essential for activity because fatty acids are bound in thioester linkage to the sulfhydryl of the prosthetic group.

Its subcellular location is the cytoplasm. The protein operates within lipid metabolism; fatty acid biosynthesis. Its function is as follows. Carrier of the growing fatty acid chain in fatty acid biosynthesis. This chain is Acyl carrier protein, found in Granulibacter bethesdensis (strain ATCC BAA-1260 / CGDNIH1).